A 312-amino-acid polypeptide reads, in one-letter code: Pyridoxal kinase (312 aa).

M1 bears the N-acetylmethionine mark. The pyridoxal site is built by S12 and T47. T47 contacts pyridoxal 5'-phosphate. A Phosphoserine modification is found at S59. D113 lines the ATP pocket. D113 is a binding site for Na(+). D118 contributes to the Mg(2+) binding site. T148 contributes to the Na(+) binding site. 150–153 (NQFE) serves as a coordination point for ATP. The residue at position 164 (S164) is a Phosphoserine. A Na(+)-binding site is contributed by T186. 186-187 (TS) contributes to the ATP binding site. S213 is modified (phosphoserine). ATP contacts are provided by residues 226 to 228 (VDP) and T233. Residue 234 to 235 (GD) coordinates pyridoxal 5'-phosphate. Residue D235 is the Proton acceptor of the active site. Position 285 is a phosphoserine (S285).

This sequence belongs to the pyridoxine kinase family. As to quaternary structure, homodimer. It depends on Zn(2+) as a cofactor. Requires Mg(2+) as cofactor.

The protein resides in the cytoplasm. The protein localises to the cytosol. The catalysed reaction is pyridoxal + ATP = pyridoxal 5'-phosphate + ADP + H(+). It carries out the reaction pyridoxamine + ATP = pyridoxamine 5'-phosphate + ADP + H(+). It catalyses the reaction pyridoxine + ATP = pyridoxine 5'-phosphate + ADP + H(+). The protein operates within cofactor metabolism; pyridoxal 5'-phosphate salvage; pyridoxal 5'-phosphate from pyridoxal: step 1/1. It functions in the pathway cofactor metabolism; pyridoxal 5'-phosphate salvage; pyridoxine 5'-phosphate from pyridoxine: step 1/1. Its pathway is cofactor metabolism; pyridoxal 5'-phosphate salvage; pyridoxamine 5'-phosphate from pyridoxamine: step 1/1. Activity is increased in the presence of K(+)or Na(+). Functionally, catalyzes the phosphorylation of the dietary vitamin B6 vitamers pyridoxal (PL), pyridoxine (PN) and pyridoxamine (PM) to form pyridoxal 5'-phosphate (PLP), pyridoxine 5'-phosphate (PNP) and pyridoxamine 5'-phosphate (PMP), respectively. PLP is the active form of vitamin B6, and acts as a cofactor for over 140 different enzymatic reactions. The polypeptide is Pyridoxal kinase (Pdxk) (Rattus norvegicus (Rat)).